We begin with the raw amino-acid sequence, 299 residues long: Formin-like protein 12 (299 aa).

In terms of domain architecture, FH2 spans 1-295 (MASNCEKMLS…LEKRKMNIKQ (295 aa)).

It belongs to the formin-like family. Class-II subfamily.

This Arabidopsis thaliana (Mouse-ear cress) protein is Formin-like protein 12 (FH12).